The sequence spans 133 residues: Small ribosomal subunit protein uS11 (133 aa).

Belongs to the universal ribosomal protein uS11 family. In terms of assembly, part of the 30S ribosomal subunit. Interacts with proteins S7 and S18. Binds to IF-3.

Its function is as follows. Located on the platform of the 30S subunit, it bridges several disparate RNA helices of the 16S rRNA. Forms part of the Shine-Dalgarno cleft in the 70S ribosome. The chain is Small ribosomal subunit protein uS11 from Bordetella avium (strain 197N).